We begin with the raw amino-acid sequence, 310 residues long: tRNA pseudouridine synthase B (310 aa).

Residue aspartate 37 is the Nucleophile of the active site.

It belongs to the pseudouridine synthase TruB family. Type 1 subfamily.

The enzyme catalyses uridine(55) in tRNA = pseudouridine(55) in tRNA. Its function is as follows. Responsible for synthesis of pseudouridine from uracil-55 in the psi GC loop of transfer RNAs. In Deinococcus deserti (strain DSM 17065 / CIP 109153 / LMG 22923 / VCD115), this protein is tRNA pseudouridine synthase B.